The following is a 152-amino-acid chain: 3-hydroxyacyl-[acyl-carrier-protein] dehydratase FabZ (152 aa).

His-58 is a catalytic residue.

Belongs to the thioester dehydratase family. FabZ subfamily.

It localises to the cytoplasm. It carries out the reaction a (3R)-hydroxyacyl-[ACP] = a (2E)-enoyl-[ACP] + H2O. Its function is as follows. Involved in unsaturated fatty acids biosynthesis. Catalyzes the dehydration of short chain beta-hydroxyacyl-ACPs and long chain saturated and unsaturated beta-hydroxyacyl-ACPs. The protein is 3-hydroxyacyl-[acyl-carrier-protein] dehydratase FabZ of Prochlorococcus marinus (strain MIT 9515).